A 418-amino-acid polypeptide reads, in one-letter code: Protein YdhQ (418 aa).

This is Protein YdhQ (ydhQ) from Escherichia coli (strain K12).